Reading from the N-terminus, the 201-residue chain is ATP-dependent Clp protease proteolytic subunit (201 aa).

Residue Ser100 is the Nucleophile of the active site. His125 is an active-site residue.

It belongs to the peptidase S14 family. As to quaternary structure, component of the chloroplastic Clp protease core complex.

It is found in the plastid. The protein localises to the chloroplast stroma. It catalyses the reaction Hydrolysis of proteins to small peptides in the presence of ATP and magnesium. alpha-casein is the usual test substrate. In the absence of ATP, only oligopeptides shorter than five residues are hydrolyzed (such as succinyl-Leu-Tyr-|-NHMec, and Leu-Tyr-Leu-|-Tyr-Trp, in which cleavage of the -Tyr-|-Leu- and -Tyr-|-Trp bonds also occurs).. Cleaves peptides in various proteins in a process that requires ATP hydrolysis. Has a chymotrypsin-like activity. Plays a major role in the degradation of misfolded proteins. This Ranunculus macranthus (Large buttercup) protein is ATP-dependent Clp protease proteolytic subunit.